Here is a 139-residue protein sequence, read N- to C-terminus: Large ribosomal subunit protein uL16 (139 aa).

Positions 1–20 are enriched in basic residues; it reads MLMPRRVKHRKQHHPTRRGA. Positions 1–24 are disordered; the sequence is MLMPRRVKHRKQHHPTRRGAAKGG.

This sequence belongs to the universal ribosomal protein uL16 family. Part of the 50S ribosomal subunit.

In terms of biological role, binds 23S rRNA and is also seen to make contacts with the A and possibly P site tRNAs. The protein is Large ribosomal subunit protein uL16 of Nocardioides sp. (strain ATCC BAA-499 / JS614).